A 150-amino-acid polypeptide reads, in one-letter code: Probable cyclic pyranopterin monophosphate synthase (150 aa).

Substrate is bound by residues 68 to 70 and 104 to 105; these read YCH and ME. The active site involves Asp-119.

Belongs to the MoaC family. As to quaternary structure, homohexamer; trimer of dimers.

The catalysed reaction is (8S)-3',8-cyclo-7,8-dihydroguanosine 5'-triphosphate = cyclic pyranopterin phosphate + diphosphate. It functions in the pathway cofactor biosynthesis; molybdopterin biosynthesis. Its function is as follows. Catalyzes the conversion of (8S)-3',8-cyclo-7,8-dihydroguanosine 5'-triphosphate to cyclic pyranopterin monophosphate (cPMP). This is Probable cyclic pyranopterin monophosphate synthase from Thermoplasma volcanium (strain ATCC 51530 / DSM 4299 / JCM 9571 / NBRC 15438 / GSS1).